Here is a 330-residue protein sequence, read N- to C-terminus: Malate dehydrogenase (330 aa).

12-18 lines the NAD(+) pocket; it reads GAAGQIG. Substrate contacts are provided by arginine 93 and arginine 99. NAD(+) is bound by residues asparagine 106, glutamine 113, and 130 to 132; that span reads VGN. 2 residues coordinate substrate: asparagine 132 and arginine 163. The Proton acceptor role is filled by histidine 188.

The protein belongs to the LDH/MDH superfamily. MDH type 2 family.

The enzyme catalyses (S)-malate + NAD(+) = oxaloacetate + NADH + H(+). Functionally, catalyzes the reversible oxidation of malate to oxaloacetate. This Thermobifida fusca (strain YX) protein is Malate dehydrogenase.